The sequence spans 498 residues: ATP synthase subunit beta, chloroplastic (498 aa).

172–179 is a binding site for ATP; it reads GGAGVGKT.

It belongs to the ATPase alpha/beta chains family. In terms of assembly, F-type ATPases have 2 components, CF(1) - the catalytic core - and CF(0) - the membrane proton channel. CF(1) has five subunits: alpha(3), beta(3), gamma(1), delta(1), epsilon(1). CF(0) has four main subunits: a(1), b(1), b'(1) and c(9-12).

Its subcellular location is the plastid. It localises to the chloroplast thylakoid membrane. It carries out the reaction ATP + H2O + 4 H(+)(in) = ADP + phosphate + 5 H(+)(out). In terms of biological role, produces ATP from ADP in the presence of a proton gradient across the membrane. The catalytic sites are hosted primarily by the beta subunits. The chain is ATP synthase subunit beta, chloroplastic from Castanea sativa (Sweet chestnut).